A 373-amino-acid chain; its full sequence is Cystathionine gamma-synthase/O-acetylhomoserine (thiol)-lyase (373 aa).

At Lys-197 the chain carries N6-(pyridoxal phosphate)lysine.

This sequence belongs to the trans-sulfuration enzymes family. Homotetramer. Requires pyridoxal 5'-phosphate as cofactor.

It is found in the cytoplasm. The enzyme catalyses O-acetyl-L-homoserine + L-cysteine = L,L-cystathionine + acetate + H(+). The catalysed reaction is O-acetyl-L-homoserine + hydrogen sulfide = L-homocysteine + acetate. The protein operates within amino-acid biosynthesis; L-methionine biosynthesis via de novo pathway. Functionally, catalyzes the formation of L-cystathionine from O-acetyl-L-homoserine and L-cysteine. Cannot use O-succinyl-L-homoserine as substrate. Also exhibits O-acetylhomoserine thiolyase activity, catalyzing the synthesis of L-homocysteine from O-acetyl-L-homoserine and sulfide. This Bacillus subtilis (strain 168) protein is Cystathionine gamma-synthase/O-acetylhomoserine (thiol)-lyase (metI).